A 410-amino-acid chain; its full sequence is Multifunctional CCA protein (410 aa).

Positions 8 and 11 each coordinate ATP. CTP is bound by residues G8 and R11. Residues D21 and D23 each coordinate Mg(2+). R91, R137, and R140 together coordinate ATP. CTP contacts are provided by R91, R137, and R140. Residues 225–326 (SGIHTLMTLQ…LNVLKKTDAF (102 aa)) enclose the HD domain.

This sequence belongs to the tRNA nucleotidyltransferase/poly(A) polymerase family. Bacterial CCA-adding enzyme type 1 subfamily. Monomer. Can also form homodimers and oligomers. Mg(2+) is required as a cofactor. The cofactor is Ni(2+).

The enzyme catalyses a tRNA precursor + 2 CTP + ATP = a tRNA with a 3' CCA end + 3 diphosphate. It carries out the reaction a tRNA with a 3' CCA end + 2 CTP + ATP = a tRNA with a 3' CCACCA end + 3 diphosphate. In terms of biological role, catalyzes the addition and repair of the essential 3'-terminal CCA sequence in tRNAs without using a nucleic acid template. Adds these three nucleotides in the order of C, C, and A to the tRNA nucleotide-73, using CTP and ATP as substrates and producing inorganic pyrophosphate. tRNA 3'-terminal CCA addition is required both for tRNA processing and repair. Also involved in tRNA surveillance by mediating tandem CCA addition to generate a CCACCA at the 3' terminus of unstable tRNAs. While stable tRNAs receive only 3'-terminal CCA, unstable tRNAs are marked with CCACCA and rapidly degraded. The protein is Multifunctional CCA protein of Neisseria gonorrhoeae (strain NCCP11945).